Here is a 237-residue protein sequence, read N- to C-terminus: Demethylmenaquinone methyltransferase (237 aa).

S-adenosyl-L-methionine contacts are provided by residues T58, D79, and 106–107; that span reads NA.

It belongs to the class I-like SAM-binding methyltransferase superfamily. MenG/UbiE family.

It carries out the reaction a 2-demethylmenaquinol + S-adenosyl-L-methionine = a menaquinol + S-adenosyl-L-homocysteine + H(+). The protein operates within quinol/quinone metabolism; menaquinone biosynthesis; menaquinol from 1,4-dihydroxy-2-naphthoate: step 2/2. Functionally, methyltransferase required for the conversion of demethylmenaquinol (DMKH2) to menaquinol (MKH2). The protein is Demethylmenaquinone methyltransferase of Listeria innocua serovar 6a (strain ATCC BAA-680 / CLIP 11262).